The sequence spans 63 residues: MKANELREKSVEELNTELLGLLREQFNLRMQAASGQLQQTHMVKQVRHNIARVKTLLTQKAGA.

It belongs to the universal ribosomal protein uL29 family.

In Pectobacterium atrosepticum (strain SCRI 1043 / ATCC BAA-672) (Erwinia carotovora subsp. atroseptica), this protein is Large ribosomal subunit protein uL29.